An 87-amino-acid chain; its full sequence is Phosphoribosyl-ATP pyrophosphatase (87 aa).

This sequence belongs to the PRA-PH family.

It is found in the cytoplasm. It carries out the reaction 1-(5-phospho-beta-D-ribosyl)-ATP + H2O = 1-(5-phospho-beta-D-ribosyl)-5'-AMP + diphosphate + H(+). It functions in the pathway amino-acid biosynthesis; L-histidine biosynthesis; L-histidine from 5-phospho-alpha-D-ribose 1-diphosphate: step 2/9. The protein is Phosphoribosyl-ATP pyrophosphatase of Beutenbergia cavernae (strain ATCC BAA-8 / DSM 12333 / CCUG 43141 / JCM 11478 / NBRC 16432 / NCIMB 13614 / HKI 0122).